A 541-amino-acid chain; its full sequence is MSNSPLGSGSRISHFTTESTDRGDERASFSSRAFIHTVPPSDPQRQAGRLPIKVLKMLTARGGHILHPEYLQPLPSTPVSPIELDAKKSPLALLAQTCSQIGKPDPAPSKLSAVTGSSASGDKESKSVPLKLSDIGAEDKSSFKPYSKHPDKKDQSASDKSGFRVPSAACPPFTPRTGSPGSPRTPPPPSEPKASSECTDKKEMEQCAKTAPPDGSAHGRLSTELTHSEGTAGCKSLSAAPSPTPASSSSSSSSVLGSGLVAPVSPYKPGHTVFPLPPASMSYPATLAGAYAGYPPQFLAHGVSLDPSKGSSLVGAQLSTLGCTGKSAASSPLTGASPPSVMTASLCRDPYCLSYHCASQLGAGATCAHDLKSGYPLVYPSHALHGVSPPSLPGHPLYPYGFMLPNDPLPHVCNWVSATGPCDKRFSSSEELLGHLRTHTAFPGATDKLLPGYPSSSSLAAAAMACHMHMPPTGASPGPLTLRSPHHHPLGLSSSRYHPYSKSPLPSGGAPVPMPAATGHYYSPYALYGQRLTTASALGYQ.

Polar residues predominate over residues 1–18; the sequence is MSNSPLGSGSRISHFTTE. Disordered stretches follow at residues 1-49 and 97-255; these read MSNS…QAGR and TCSQ…SSSV. Basic and acidic residues predominate over residues 137–157; sequence AEDKSSFKPYSKHPDKKDQSA. Over residues 236–255 the composition is skewed to low complexity; the sequence is SLSAAPSPTPASSSSSSSSV. The C2H2-type zinc-finger motif lies at 411-439; that stretch reads HVCNWVSATGPCDKRFSSSEELLGHLRTH. The disordered stretch occupies residues 474-511; that stretch reads GASPGPLTLRSPHHHPLGLSSSRYHPYSKSPLPSGGAP.

It belongs to the Elbow/Noc family.

It localises to the nucleus. In terms of biological role, may function as a transcriptional repressor. This is Zinc finger protein 503 (znf503) from Xenopus tropicalis (Western clawed frog).